The primary structure comprises 311 residues: Acetaldehyde dehydrogenase (311 aa).

Cys131 functions as the Acyl-thioester intermediate in the catalytic mechanism. NAD(+)-binding positions include 162–170 (SVGPGTRKN) and Asn273.

It belongs to the acetaldehyde dehydrogenase family.

It catalyses the reaction acetaldehyde + NAD(+) + CoA = acetyl-CoA + NADH + H(+). The sequence is that of Acetaldehyde dehydrogenase from Ralstonia pickettii (strain 12J).